A 79-amino-acid chain; its full sequence is Hematopoietic cell signal transducer (79 aa).

An N-terminal signal peptide occupies residues Met1–Ala18. Topologically, residues Gln19–Leu35 are extracellular. The helical transmembrane segment at Leu36–Val56 threads the bilayer. At Cys57 to Gly79 the chain is on the cytoplasmic side. Tyr72 carries the post-translational modification Phosphotyrosine. The GRB2 binding site stretch occupies residues Tyr72–Asn74. Residues Tyr72–Met75 are PIK3R1 binding site.

It belongs to the DAP10 family. Homodimer; Disulfide-linked. Heterohexamer composed of four subunits of HCST/DAP10 and two subunits of KLRK1. Interacts (via transmembrane domain) with KLRK1 (via transmembrane domain); the interaction is required for KLRK1 NK cell surface and induces NK cell-mediated cytotoxicity. Interacts with PIK3R1 and GRB2. Interacts with CLEC5A. Forms an CLEC5A/TYROBP/HCST trimolecular complex depending almost solely on TYROBP. Interacts with KLRK1. Interacts with CD300H. In terms of processing, phosphorylated; PIK3R1 and GRB2 associate specifically with tyrosine-phosphorylated HCST. Post-translationally, O-glycosylated. In terms of tissue distribution, expressed predominantly in lymphohematopoietic tissues.

The protein localises to the membrane. Functionally, transmembrane adapter protein which associates with KLRK1 to form an activation receptor KLRK1-HCST in lymphoid and myeloid cells; this receptor plays a major role in triggering cytotoxicity against target cells expressing cell surface ligands such as MHC class I chain-related MICA and MICB, and UL16-binding proteins (ULBPs); these ligands are up-regulated by stress conditions and pathological state such as viral infection and tumor transformation. Functions as a docking site for PI3-kinase PIK3R1 and GRB2. Interaction of ULBPs with KLRK1-HCST triggers calcium mobilization and activation of the PIK3R1, MAP2K/ERK, and JAK2/STAT5 signaling pathways. Both PIK3R1 and GRB2 are required for full KLRK1-HCST-mediated activation and ultimate killing of target cells. In NK cells, KLRK1-HCST signaling directly induces cytotoxicity and enhances cytokine production initiated via DAP12/TYROBP-associated receptors. In T-cells, it provides primarily costimulation for TCR-induced signals. KLRK1-HCST receptor plays a role in immune surveillance against tumors and is required for cytolysis of tumors cells; indeed, melanoma cells that do not express KLRK1 ligands escape from immune surveillance mediated by NK cells. In Sus scrofa (Pig), this protein is Hematopoietic cell signal transducer (HCST).